The following is a 102-amino-acid chain: Small ribosomal subunit protein uS10 (102 aa).

The protein belongs to the universal ribosomal protein uS10 family. As to quaternary structure, part of the 30S ribosomal subunit.

Its function is as follows. Involved in the binding of tRNA to the ribosomes. The sequence is that of Small ribosomal subunit protein uS10 from Lacticaseibacillus casei (strain BL23) (Lactobacillus casei).